Here is a 352-residue protein sequence, read N- to C-terminus: Dihydrorhizobitoxine desaturase (352 aa).

A run of 3 helical transmembrane segments spans residues Leu53–Tyr73, Leu89–Phe109, and Ile204–Ile224.

It belongs to the fatty acid desaturase type 1 family.

Its subcellular location is the cell inner membrane. The enzyme catalyses dihydrorhizobitoxine + 2 reduced [2Fe-2S]-[ferredoxin] + O2 + 2 H(+) = rhizobitoxine + 2 oxidized [2Fe-2S]-[ferredoxin] + 2 H2O. Its function is as follows. Involved in the biosynthesis of the nodulation enhancer compound rhizobitoxine. Catalyzes the final step of the pathway, the introduction of a carbon double bond into the C3 position of dihydrorhizobitoxine to produce rhizobitoxine. The polypeptide is Dihydrorhizobitoxine desaturase (Bradyrhizobium elkanii).